We begin with the raw amino-acid sequence, 354 residues long: Glycerol-3-phosphate dehydrogenase [NAD(+)], glycosomal (354 aa).

NAD(+) contacts are provided by residues 15–20 (GSGAFG), F90, K118, and A150. A substrate-binding site is contributed by K118. The active-site Proton acceptor is K203. R267 and E293 together coordinate NAD(+). 267–268 (RN) serves as a coordination point for substrate. Residues 352–354 (SKM) carry the Microbody targeting signal motif.

Belongs to the NAD-dependent glycerol-3-phosphate dehydrogenase family.

It is found in the glycosome. It carries out the reaction sn-glycerol 3-phosphate + NAD(+) = dihydroxyacetone phosphate + NADH + H(+). In Trypanosoma brucei brucei, this protein is Glycerol-3-phosphate dehydrogenase [NAD(+)], glycosomal (GPD).